Reading from the N-terminus, the 297-residue chain is Trimeric intracellular cation channel type A (297 aa).

Over 1 to 18 (MDLISSLSLGELALSFSR) the chain is Lumenal. Residues 19-39 (VPLFPVFDLSYFIVSIIYLKY) form a helical membrane-spanning segment. Topologically, residues 40-51 (EPGSVELSRRHP) are cytoplasmic. Residues 52-72 (VASWLCAMLHCFGSYILADLL) form a helical membrane-spanning segment. Residues 73–85 (LGEPIIDYFSNSS) lie on the Lumenal side of the membrane. Gly-74 contributes to the Ca(2+) binding site. The helical transmembrane segment at 86-106 (SILLASGVWYLIFFCPLDLFY) threads the bilayer. Topologically, residues 107-143 (KCVCFLPVKLIFVAMKEVVRVRKIAVGIHHAHHYHHG) are cytoplasmic. Positions 122 and 126 each coordinate a 1,2-diacyl-sn-glycero-3-phospho-(1D-myo-inositol-4,5-bisphosphate). A helical transmembrane segment spans residues 144 to 164 (WFIMIATGWVKGSGVALLSNL). The Lumenal portion of the chain corresponds to 165–177 (EQLLRGVWKPETN). The helical transmembrane segment at 178-198 (EILHMSFPTKASLYGAILFTL) threads the bilayer. The Cytoplasmic portion of the chain corresponds to 199–208 (QQTRWLPVSK). Residues 209–229 (ASLIFVFTMFMVSCKVFLTAT) traverse the membrane as a helical segment. Residues 230–233 (HSHS) lie on the Lumenal side of the membrane. The chain crosses the membrane as a helical span at residues 234–254 (SPFDVLEGYICPVLFGATWGG). Over 255-297 (DHHHDNHGAPHGMGLGTQHSGLPAKAKEELSEGFRKKKTKKAD) the chain is Cytoplasmic. Residues 259 to 297 (DNHGAPHGMGLGTQHSGLPAKAKEELSEGFRKKKTKKAD) form a disordered region. Basic and acidic residues predominate over residues 279–288 (KAKEELSEGF).

It belongs to the TMEM38 family. Homotrimer; conformation seems to be controled by binding to diacylglycerol (DAG).

Its subcellular location is the sarcoplasmic reticulum membrane. The protein resides in the nucleus membrane. It carries out the reaction K(+)(in) = K(+)(out). With respect to regulation, channel activity is activated by a change of voltage within the sarcoplasmic reticulum lumen and blocked by luminal high Ca(2+) levels. Intracellular monovalent cation channel required for maintenance of rapid intracellular calcium release. Acts as a potassium counter-ion channel that functions in synchronization with calcium release from intracellular stores. Opened by a change of voltage within the sarcoplasmic reticulum lumen. This is Trimeric intracellular cation channel type A from Rattus norvegicus (Rat).